A 352-amino-acid chain; its full sequence is V-type ATP synthase subunit C (352 aa).

The protein belongs to the V-ATPase V0D/AC39 subunit family.

In terms of biological role, produces ATP from ADP in the presence of a proton gradient across the membrane. The protein is V-type ATP synthase subunit C (atpC) of Deinococcus radiodurans (strain ATCC 13939 / DSM 20539 / JCM 16871 / CCUG 27074 / LMG 4051 / NBRC 15346 / NCIMB 9279 / VKM B-1422 / R1).